The primary structure comprises 317 residues: (2S)-3-sulfopropanediol dehydratase activating enzyme (317 aa).

Residues 18–306 form the Radical SAM core domain; sequence HDGPGLRTEL…QMLAEYFNQR (289 aa). [4Fe-4S] cluster is bound by residues cysteine 32, cysteine 36, cysteine 39, cysteine 58, cysteine 64, cysteine 67, cysteine 71, cysteine 92, cysteine 95, cysteine 98, and cysteine 102. 38–40 contributes to the S-adenosyl-L-methionine binding site; it reads WCS. 2 consecutive 4Fe-4S ferredoxin-type domains span residues 49–82 and 83–112; these read AQVG…FTRG and KLTS…LWGK. Residues glycine 142 and 191-193 each bind S-adenosyl-L-methionine; that span reads DIK.

Belongs to the organic radical-activating enzymes family. [4Fe-4S] cluster serves as cofactor.

The enzyme catalyses glycyl-[protein] + reduced [flavodoxin] + S-adenosyl-L-methionine = glycin-2-yl radical-[protein] + semiquinone [flavodoxin] + 5'-deoxyadenosine + L-methionine + H(+). It functions in the pathway organosulfur degradation; alkanesulfonate degradation. Functionally, involved in the degradation of the organosulfur compound 2(S)-dihydroxypropanesulfonate (DHPS). Catalyzes activation of the (2S)-3-sulfopropanediol dehydratase HpfG under anaerobic conditions by generation of an organic free radical on a glycine residue. The chain is (2S)-3-sulfopropanediol dehydratase activating enzyme from Klebsiella oxytoca.